A 305-amino-acid chain; its full sequence is Ubiquinone biosynthesis protein COQ4 homolog, mitochondrial (305 aa).

Residues His-150, Asp-151, His-154, and Glu-166 each coordinate Zn(2+).

This sequence belongs to the COQ4 family. Component of a multi-subunit COQ enzyme complex. It depends on Zn(2+) as a cofactor.

It is found in the mitochondrion inner membrane. It catalyses the reaction a 4-hydroxy-3-methoxy-5-(all-trans-polyprenyl)benzoate + H(+) = a 2-methoxy-6-(all-trans-polyprenyl)phenol + CO2. It participates in cofactor biosynthesis; ubiquinone biosynthesis. Its function is as follows. Lyase that catalyzes the C1-decarboxylation of 4-hydroxy-3-methoxy-5-(all-trans-polyprenyl)benzoic acid into 2-methoxy-6-(all-trans-polyprenyl)phenol during ubiquinone biosynthesis. The sequence is that of Ubiquinone biosynthesis protein COQ4 homolog, mitochondrial from Cryptosporidium parvum (strain Iowa II).